Here is a 544-residue protein sequence, read N- to C-terminus: Chaperonin GroEL (544 aa).

Residues 29–32 (TLGP), Lys50, 86–90 (DGTTT), Gly414, and Asp495 each bind ATP.

Belongs to the chaperonin (HSP60) family. As to quaternary structure, forms a cylinder of 14 subunits composed of two heptameric rings stacked back-to-back. Interacts with the co-chaperonin GroES.

Its subcellular location is the cytoplasm. It carries out the reaction ATP + H2O + a folded polypeptide = ADP + phosphate + an unfolded polypeptide.. Together with its co-chaperonin GroES, plays an essential role in assisting protein folding. The GroEL-GroES system forms a nano-cage that allows encapsulation of the non-native substrate proteins and provides a physical environment optimized to promote and accelerate protein folding. The polypeptide is Chaperonin GroEL (Treponema pallidum subsp. pallidum (strain SS14)).